The sequence spans 1279 residues: ATP-dependent helicase/nuclease subunit A (1279 aa).

Residues 4-499 (TKWTDEQRQA…VKLFKNFRSR (496 aa)) form the UvrD-like helicase ATP-binding domain. 25–32 (AGAGAGKT) is an ATP binding site. The region spanning 526 to 853 (EEALKVGASY…RIMSIHKSKG (328 aa)) is the UvrD-like helicase C-terminal domain.

It belongs to the helicase family. AddA subfamily. In terms of assembly, heterodimer of AddA and AddB/RexB. It depends on Mg(2+) as a cofactor.

The catalysed reaction is Couples ATP hydrolysis with the unwinding of duplex DNA by translocating in the 3'-5' direction.. The enzyme catalyses ATP + H2O = ADP + phosphate + H(+). In terms of biological role, the heterodimer acts as both an ATP-dependent DNA helicase and an ATP-dependent, dual-direction single-stranded exonuclease. Recognizes the chi site generating a DNA molecule suitable for the initiation of homologous recombination. The AddA nuclease domain is required for chi fragment generation; this subunit has the helicase and 3' -&gt; 5' nuclease activities. This Clostridium botulinum (strain 657 / Type Ba4) protein is ATP-dependent helicase/nuclease subunit A.